Consider the following 329-residue polypeptide: DNA-directed RNA polymerase subunit alpha (329 aa).

Residues 1 to 235 (MQNSIIGFLK…EQLEAFVDLR (235 aa)) form an alpha N-terminal domain (alpha-NTD) region. The tract at residues 249-329 (FEPILLRPVD…KWPPSSILEE (81 aa)) is alpha C-terminal domain (alpha-CTD).

Belongs to the RNA polymerase alpha chain family. Homodimer. The RNAP catalytic core consists of 2 alpha, 1 beta, 1 beta' and 1 omega subunit. When a sigma factor is associated with the core the holoenzyme is formed, which can initiate transcription.

The catalysed reaction is RNA(n) + a ribonucleoside 5'-triphosphate = RNA(n+1) + diphosphate. Functionally, DNA-dependent RNA polymerase catalyzes the transcription of DNA into RNA using the four ribonucleoside triphosphates as substrates. This chain is DNA-directed RNA polymerase subunit alpha, found in Buchnera aphidicola subsp. Schizaphis graminum (strain Sg).